A 226-amino-acid polypeptide reads, in one-letter code: Gap junction beta-2 protein (226 aa).

An intramembrane segment occupies 2–13; that stretch reads DWGALQTILGGV. Over 14–20 the chain is Cytoplasmic; that stretch reads NKHSTSI. Residues 21–40 form a helical membrane-spanning segment; the sequence is GKIWLTVLFIFRIMILVVAA. The Extracellular segment spans residues 41–73; the sequence is KEVWGDEQADFVCNTLQPGCKNVCYDHYFPISH. Positions 42, 45, and 47 each coordinate Ca(2+). Cystine bridges form between C53/C180, C60/C174, and C64/C169. The chain crosses the membrane as a helical span at residues 74–94; that stretch reads IRLWALQLIFVSTPALLVAMH. At 95-135 the chain is on the cytoplasmic side; the sequence is VAYRRHEKKRKFIKGEIKSEFKDIEEIKTQKVRIEGSLWWT. The helical transmembrane segment at 136–156 threads the bilayer; the sequence is YTSSIFFRVIFEAAFMYVFYV. Residues 157–189 are Extracellular-facing; sequence MYDGFSMQRLVKCNAWPCPNTVDCFVSRPTEKT. Residues 190 to 210 traverse the membrane as a helical segment; that stretch reads VFTVFMIAVSGICILLNVTEL. Over 211 to 226 the chain is Cytoplasmic; it reads CYLLIRYCSGRSKKPV.

The protein belongs to the connexin family. Beta-type (group I) subfamily. In terms of assembly, a hemichannel or connexon is composed of a hexamer of connexins. A functional gap junction is formed by the apposition of two hemichannels. Forms heteromeric channels with GJB4. Interacts with CNST.

Its subcellular location is the cell membrane. It is found in the cell junction. The protein resides in the gap junction. Functionally, structural component of gap junctions. Gap junctions are dodecameric channels that connect the cytoplasm of adjoining cells. They are formed by the docking of two hexameric hemichannels, one from each cell membrane. Small molecules and ions diffuse from one cell to a neighboring cell via the central pore. This chain is Gap junction beta-2 protein (GJB2), found in Pongo pygmaeus (Bornean orangutan).